The following is a 90-amino-acid chain: Acylphosphatase (90 aa).

Positions 5 to 90 (GCKVIVSGIV…YQKTNDFIAC (86 aa)) constitute an Acylphosphatase-like domain. Catalysis depends on residues R20 and N38.

The protein belongs to the acylphosphatase family.

It catalyses the reaction an acyl phosphate + H2O = a carboxylate + phosphate + H(+). This Psychromonas ingrahamii (strain DSM 17664 / CCUG 51855 / 37) protein is Acylphosphatase (acyP).